The chain runs to 102 residues: Large ribosomal subunit protein bL21 (102 aa).

The protein belongs to the bacterial ribosomal protein bL21 family. In terms of assembly, part of the 50S ribosomal subunit. Contacts protein L20.

In terms of biological role, this protein binds to 23S rRNA in the presence of protein L20. This chain is Large ribosomal subunit protein bL21, found in Geotalea uraniireducens (strain Rf4) (Geobacter uraniireducens).